The following is a 1347-amino-acid chain: Agglutinin-like protein 5 (1347 aa).

A signal peptide spans 1–19 (MIQQFTLLFLYLSFATAKA). 4 disulfide bridges follow: Cys73–Cys150, Cys96–Cys112, Cys205–Cys298, and Cys227–Cys256. ALS repeat units lie at residues 365-396 (TTITTSYVGVTTSYSTKTAPIGETATVIVDVP), 401-432 (TTVTSEWTGTITTTTTRTNPTDSIDTVVVQVP), 438-469 (TTTTQFWSESFTSTTTITNSLKGTDSVIVREP), 474-505 (VTTTEFWSESYATTETITNGPEGTDSVIVREP), 510-541 (VTTTEFWSESYATTETVTNKPEGTDSVIIKEP), and 546-577 (VTTTEFWSESYATTETITTGPLGTDSIVIHDP). Disordered regions lie at residues 580–678 (ESSS…WDSS), 704–725 (VSNSISTSQETTSSSGEESNTS), and 789–813 (SDPTSSFDSSSSLNSDSSSSPFSDE). 2 N-linked (GlcNAc...) asparagine glycosylation sites follow: Asn593 and Asn723. The N-linked (GlcNAc...) asparagine glycan is linked to Asn847. Disordered stretches follow at residues 855 to 896 (ESES…STVT), 909 to 964 (TGMP…KSSV), 977 to 1021 (SETS…KESS), 1062 to 1111 (EDNE…VSSL), and 1139 to 1180 (ATSL…NRLS). Composition is skewed to low complexity over residues 856–870 (SESSSVASPSMASES), 879–896 (SESTDTTSSIGTDSSTVT), and 921–939 (TSDVTTTSSFVASSTPTSA). Residues 940-950 (EQSITDNPNID) show a composition bias toward polar residues. 2 stretches are compositionally biased toward low complexity: residues 951-964 (SSQTSASSSTKSSV) and 977-1002 (SETSTLSSDDSTSSDTSISSTTNSDT). Composition is skewed to polar residues over residues 1003-1021 (GNINAGSSHTSTASIKESS) and 1066-1088 (PNTFTSTPSSHSEIFSSDNSVLS). Low complexity-rich tracts occupy residues 1097 to 1111 (IKTSPTTDVTTVSSL) and 1140 to 1158 (TSLRSTSSSSNHATESSGT). N-linked (GlcNAc...) asparagine glycans are attached at residues Asn1229 and Asn1254. Ser1326 is lipidated: GPI-anchor amidated serine. Residues 1327–1347 (SATKHPSWLLKFISVALFFFL) constitute a propeptide, removed in mature form.

This sequence belongs to the ALS family. As to quaternary structure, forms homodimers through the tandem repeats. Aggregates in amyloid-like structures, with self-propagating secondary-structure changes, amyloid-characteristic dye binding, and induced birefringence. Post-translationally, the GPI-anchor is attached to the protein in the endoplasmic reticulum and serves to target the protein to the cell surface. There, the glucosamine-inositol phospholipid moiety is cleaved off and the GPI-modified mannoprotein is covalently attached via its lipidless GPI glycan remnant to the 1,6-beta-glucan of the outer cell wall layer.

The protein resides in the cell membrane. It localises to the secreted. Its subcellular location is the cell wall. Functionally, cell surface adhesion protein which mediates both yeast-to-host tissue adherence and yeast aggregation. Plays an important role in the pathogenesis of C.albicans infections. Forms amyloid structures, essential for cell-cell association and cell-substrate adhesion to polystyrene. In Candida albicans (strain SC5314 / ATCC MYA-2876) (Yeast), this protein is Agglutinin-like protein 5 (ALS5).